The chain runs to 418 residues: Oxalate:formate antiporter (418 aa).

Helical transmembrane passes span 17–37 (WFYLVLAVLLMCMISGVQYSW), 48–68 (LGVSLAAVQTAFTLSQVIQAG), 84–104 (IPLMFGGAMVLAGWTFMGMVD), 108–128 (ALYALYTLAGAGVGIVYGIAM), 141–161 (LASGFTAAGYGLGVLPFLPLI), 172–192 (AAFMYTGLIMGILIILIAFVI), 222–242 (FWVLWTAFFSVNFGGLLLVAN), 250–270 (LGLAAGVLTIGVSIQNLFNGG), 288–308 (MSVVFGINAVVLALFPTIAAL), 311–331 (VAFIAMLAIAFFTWGGSYALF), 350–370 (FFWAAKATASIFGGGLGAAIA), and 378–398 (AFLITAITSFIAFALATFVIP). Lys-355 is a binding site for oxalate.

The protein belongs to the major facilitator superfamily. OFA (TC 2.A.1.11) family. In terms of assembly, monomer.

The protein resides in the cell inner membrane. Anion transporter that carries out the exchange of divalent oxalate with monovalent formate, the product of oxalate decarboxylation, at the plasma membrane, and in doing so catalyzes the vectorial portion of a proton-motive metabolic cycle that drives ATP synthesis. This Oxalobacter formigenes protein is Oxalate:formate antiporter (oxlT).